The following is a 716-amino-acid chain: Cytoplasmic polyadenylation element-binding protein 3 (716 aa).

The segment covering 1–11 has biased composition (basic and acidic residues); it reads MQDDLLMDKSK. 2 disordered regions span residues 1 to 118 and 162 to 209; these read MQDD…WSTG and AQTQ…RSAA. Composition is skewed to low complexity over residues 13 to 31 and 54 to 63; these read QPQS…QQLQ and SSAVPALSPA. Residues 91 to 100 show a composition bias toward pro residues; sequence PQQPPPPQEP. The span at 107–118 shows a compositional bias: polar residues; that stretch reads LSPSFGSTWSTG. The span at 169–186 shows a compositional bias: pro residues; sequence QPPPPAPQPPQPAQPPQA. The segment covering 187–209 has biased composition (low complexity); that stretch reads QPSQQRRSPASPSQAPYAQRSAA. A phosphoserine mark is found at Ser194, Ser197, and Ser291. Arg309 is subject to Asymmetric dimethylarginine. A phosphoserine mark is found at Ser419 and Ser420. RRM domains follow at residues 459-550 and 567-649; these read RKVF…PWNL and KTIF…PYVL.

This sequence belongs to the RRM CPEB family. As to quaternary structure, following synaptic activity, aggregates to form amyloid-like oligomers. Aggregation requires an intact actin cytoskeleton. Interacts with STAT5B; this inhibits STAT5B-mediated transcriptional activation. Interacts with E3 ubiquitin-protein ligase NEURL1; this leads to monoubiquitination and activation of CPEB3. Interacts with CAPN2; this leads to cleavage of CPEB3. Interacts (via C-terminal RNA-binding region) with TOB1; TOB1 also binds CNOT7/CAF1 and recruits it to CPEB3 to form a ternary complex. Interacts with SUMO-conjugating enzyme UBC9. Interacts with IPO5; the interaction is enhanced in a RAN-regulated manner following neuronal stimulation and mediates CPEB3 nuclear import. Interacts with exportin XPO1/CRM1. Activated by NEURL1-mediated monoubiquitination, resulting in the growth of new dendritic spines and increased levels of GRIA1 and GRIA2. NEURL1-mediated monoubiquitination facilitates synaptic plasticity and hippocampal-dependent memory storage. Post-translationally, under basal unstimulated conditions when CPEB3 is mainly unaggregated, sumoylated and acts as a translational repressor. Following neuronal stimulation, becomes desumoylated and aggregated which is required for the translation of mRNA targets and for dendritic filopodia formation. In terms of processing, following neuronal stimulation, cleaved by CAPN2 which abolishes its translational repressor activity, leading to translation of CPEB3 target mRNAs. Phosphorylation is enhanced by neuronal stimulation. Highly expressed in brain (at protein level). In brain, expressed in the hippocampus, granule cells and interneurons of the cerebellum, and mitral cells of the olfactory bulb (at protein level). Detected in the spinal cord and in peripheral dorsal root ganglia (at protein level). In the retina, strongly expressed in the retinal ganglion layer and, to a lesser extent, in the inner margin of the inner nuclear layer with expression also detected in the inner and outer plexiform layers (at protein level). Highly expressed in brain and heart, less in liver, kidney, embryo, skeletal muscle, lung and ovary. Weakly expressed in granular cells of dentate gyrus and the pyramidal cells of CA3 and CA1 of the hippocampus.

The protein resides in the cytoplasm. The protein localises to the nucleus. It is found in the synapse. It localises to the cell projection. Its subcellular location is the dendrite. The protein resides in the postsynaptic density. Its function is as follows. Sequence-specific RNA-binding protein which acts as a translational repressor in the basal unstimulated state but, following neuronal stimulation, acts as a translational activator. In contrast to CPEB1, does not bind to the cytoplasmic polyadenylation element (CPE), a uridine-rich sequence element within the mRNA 3'-UTR, but binds to a U-rich loop within a stem-loop structure. Required for the consolidation and maintenance of hippocampal-based long term memory. In the basal state, binds to the mRNA 3'-UTR of the glutamate receptors GRIA1 and GRIA2 and negatively regulates their translation. Also represses the translation of DLG4, GRIN1 GRIN2A and GRIN2B. When activated, acts as a translational activator of GRIA1 and GRIA2. In the basal state, suppresses SUMO2 translation but activates it following neuronal stimulation. Binds to the 3'-UTR of TRPV1 mRNA and represses TRPV1 translation which is required to maintain normal thermoception. Binds actin mRNA, leading to actin translational repression in the basal state and to translational activation following neuronal stimulation. Negatively regulates target mRNA levels by binding to TOB1 which recruits CNOT7/CAF1 to a ternary complex and this leads to target mRNA deadenylation and decay. In addition to its role in translation, binds to and inhibits the transcriptional activation activity of STAT5B without affecting its dimerization or DNA-binding activity. This, in turn, represses transcription of the STAT5B target gene EGFR which has been shown to play a role in enhancing learning and memory performance. In contrast to CPEB1, CPEB2 and CPEB4, not required for cell cycle progression. The polypeptide is Cytoplasmic polyadenylation element-binding protein 3 (Cpeb3) (Mus musculus (Mouse)).